Consider the following 71-residue polypeptide: Pro-glucagon (71 aa).

This sequence belongs to the glucagon family.

It is found in the secreted. In terms of biological role, plays a key role in glucose metabolism and homeostasis. Regulates blood glucose by increasing gluconeogenesis and decreasing glycolysis. In Piaractus mesopotamicus (Small-scaled pacu), this protein is Pro-glucagon (gcg).